The following is a 348-amino-acid chain: Protein-glutamate methylesterase/protein-glutamine glutaminase 2 (348 aa).

One can recognise a Response regulatory domain in the interval 5-122 (KVLIIDDSAL…DLGLSQYRDE (118 aa)). Residue Asp-56 is modified to 4-aspartylphosphate. The CheB-type methylesterase domain occupies 157-348 (SLKTGFLCAI…AANIIKHALK (192 aa)). Active-site residues include Ser-169, His-195, and Asp-291.

The protein belongs to the CheB family. Post-translationally, phosphorylated by CheA. Phosphorylation of the N-terminal regulatory domain activates the methylesterase activity.

It is found in the cytoplasm. The enzyme catalyses [protein]-L-glutamate 5-O-methyl ester + H2O = L-glutamyl-[protein] + methanol + H(+). It catalyses the reaction L-glutaminyl-[protein] + H2O = L-glutamyl-[protein] + NH4(+). Its function is as follows. Involved in chemotaxis. Part of a chemotaxis signal transduction system that modulates chemotaxis in response to various stimuli. Catalyzes the demethylation of specific methylglutamate residues introduced into the chemoreceptors (methyl-accepting chemotaxis proteins or MCP) by CheR. Also mediates the irreversible deamidation of specific glutamine residues to glutamic acid. This is Protein-glutamate methylesterase/protein-glutamine glutaminase 2 from Saccharophagus degradans (strain 2-40 / ATCC 43961 / DSM 17024).